A 431-amino-acid chain; its full sequence is STE20-related kinase adapter protein alpha (431 aa).

Residues Ser2 and Ser46 each carry the phosphoserine modification. The 311-residue stretch at 69–379 folds into the Protein kinase domain; the sequence is YELLTVIGKG…ASTLLNHSFF (311 aa). A disordered region spans residues 310 to 347; the sequence is LTMSPSRSVANSGLSDSLTTSTPRPSNGDSPSHPYHRT. The segment covering 312 to 339 has biased composition (polar residues); the sequence is MSPSRSVANSGLSDSLTTSTPRPSNGDS. 2 positions are modified to phosphothreonine; by LKB1: Thr329 and Thr419.

The protein belongs to the protein kinase superfamily. STE Ser/Thr protein kinase family. STE20 subfamily. Component of a trimeric complex composed of STK11/LKB1, STRAD (STRADA or STRADB) and CAB39/MO25 (CAB39/MO25alpha or CAB39L/MO25beta): the complex tethers STK11/LKB1 in the cytoplasm and stimulates its catalytic activity.

The protein resides in the nucleus. It localises to the cytoplasm. Its function is as follows. Pseudokinase which, in complex with CAB39/MO25 (CAB39/MO25alpha or CAB39L/MO25beta), binds to and activates STK11/LKB1. Adopts a closed conformation typical of active protein kinases and binds STK11/LKB1 as a pseudosubstrate, promoting conformational change of STK11/LKB1 in an active conformation. The sequence is that of STE20-related kinase adapter protein alpha (STRADA) from Homo sapiens (Human).